We begin with the raw amino-acid sequence, 207 residues long: MQIGLDFNLVEDLVAGVDEVGRGPLCGAVVTAAVILDPARPILGLNDSKKLTEAKREALFDEICEKALSFCIARAEVEEIDRLNILQATMLAMQRAVEGLHITPKLALIDGNRCPKLAVPASPVVKGDSQVPAIAAASILAKVTRDREMSAFELIYPGYGIGGHKGYPTPVHLEALARLGPTPIHRRSFAPVRAAWEAREGVTDSLI.

The RNase H type-2 domain occupies 12-201 (DLVAGVDEVG…VRAAWEAREG (190 aa)). Asp18, Glu19, and Asp110 together coordinate a divalent metal cation.

The protein belongs to the RNase HII family. It depends on Mn(2+) as a cofactor. The cofactor is Mg(2+).

The protein resides in the cytoplasm. The enzyme catalyses Endonucleolytic cleavage to 5'-phosphomonoester.. Its function is as follows. Endonuclease that specifically degrades the RNA of RNA-DNA hybrids. This Pseudomonas putida (strain GB-1) protein is Ribonuclease HII.